Consider the following 156-residue polypeptide: Arginine repressor (156 aa).

The protein belongs to the ArgR family.

The protein resides in the cytoplasm. It participates in amino-acid biosynthesis; L-arginine biosynthesis [regulation]. Its function is as follows. Regulates arginine biosynthesis genes. The sequence is that of Arginine repressor from Photobacterium profundum (strain SS9).